The sequence spans 471 residues: Protoheme IX farnesyltransferase, mitochondrial (471 aa).

The N-terminal 60 residues, 1–60 (MLLSNVAVNRTVVHTQLVSGSRSALHALSRTSHSVPVTHTHQRRHIFSHKRRLSSSTLAI), are a transit peptide targeting the mitochondrion. Helical transmembrane passes span 188 to 208 (AVSL…SGSA), 247 to 267 (ITGT…VAIL), 287 to 307 (IINT…GWAA), 312 to 332 (LLHP…FPHF), 368 to 388 (LLMF…WWFV), and 430 to 450 (KLFW…MIHK).

This sequence belongs to the UbiA prenyltransferase family.

It localises to the mitochondrion membrane. The enzyme catalyses heme b + (2E,6E)-farnesyl diphosphate + H2O = Fe(II)-heme o + diphosphate. Converts protoheme IX and farnesyl diphosphate to heme O. This Yarrowia lipolytica (strain CLIB 122 / E 150) (Yeast) protein is Protoheme IX farnesyltransferase, mitochondrial (COX10).